Consider the following 328-residue polypeptide: MNQVDYLRISLIDRCNFRCQYCMPEGSELNYILKQQLLTDEELLTLVQEVFIPVGFRQFRLTGGEPLLRPHVVDLVGAIASLPQTQDLSMTTNGFLLAPIAQNLYDAGLRRINISLDSLDPHIFDQIIGSHGRPRWQQVWDGIQAAHRVGFDPLKLNVVVIPGVNDHEILDLAALSIDKQWHVRFIEFMPIGNGELFGDRGWVSSAELRQQIRDRWGLTDAQVRGAGPADVFQIPGAKGTLGFISQMSECFCDRCNRMRLSADGWLRPCLLNETGQLDLKTSLRSGVSIHQLREQVRHLLAIKPEINYKGRDSGTTGVYSRTMSQIGG.

A Radical SAM core domain is found at 1–229 (MNQVDYLRIS…DAQVRGAGPA (229 aa)). Arg8 contacts GTP. Positions 15 and 19 each coordinate [4Fe-4S] cluster. Tyr21 lines the S-adenosyl-L-methionine pocket. Position 22 (Cys22) interacts with [4Fe-4S] cluster. GTP is bound at residue Arg60. An S-adenosyl-L-methionine-binding site is contributed by Gly64. GTP is bound at residue Thr91. Ser115 is a binding site for S-adenosyl-L-methionine. GTP is bound at residue Lys155. Met189 serves as a coordination point for S-adenosyl-L-methionine. The [4Fe-4S] cluster site is built by Cys252 and Cys255. Residue 257-259 (RMR) participates in GTP binding. Cys269 provides a ligand contact to [4Fe-4S] cluster.

Belongs to the radical SAM superfamily. MoaA family. In terms of assembly, monomer and homodimer. [4Fe-4S] cluster serves as cofactor.

The enzyme catalyses GTP + AH2 + S-adenosyl-L-methionine = (8S)-3',8-cyclo-7,8-dihydroguanosine 5'-triphosphate + 5'-deoxyadenosine + L-methionine + A + H(+). Its pathway is cofactor biosynthesis; molybdopterin biosynthesis. Functionally, catalyzes the cyclization of GTP to (8S)-3',8-cyclo-7,8-dihydroguanosine 5'-triphosphate. The polypeptide is GTP 3',8-cyclase (Nostoc sp. (strain PCC 7120 / SAG 25.82 / UTEX 2576)).